The following is a 122-amino-acid chain: Cofilin-5 (122 aa).

The ADF-H domain occupies 3-122; sequence SRIIEIDPNC…VKDLIQLSNL (120 aa).

It belongs to the actin-binding proteins ADF family.

Its subcellular location is the cytoplasm. It is found in the cytoskeleton. Functionally, controls actin polymerization and depolymerization. This Dictyostelium discoideum (Social amoeba) protein is Cofilin-5 (cofF).